The sequence spans 570 residues: Methyl-coenzyme M reductase subunit alpha (570 aa).

Glutamine 161 is a coenzyme F430 binding site. Coenzyme B is bound by residues arginine 239, 270 to 271 (KH), and arginine 284. A Pros-methylhistidine modification is found at histidine 271. Arginine 285 is modified (5-methylarginine). The coenzyme M site is built by tyrosine 346 and phenylalanine 464. At glycine 465 the chain carries 1-thioglycine. Position 470 is a (Z)-2,3-didehydroaspartate (aspartate 470). Cysteine 472 is subject to S-methylcysteine.

The protein belongs to the methyl-coenzyme M reductase alpha subunit family. MCR is a hexamer of two alpha, two beta, and two gamma chains, forming a dimer of heterotrimers. Coenzyme F430 is required as a cofactor. Post-translationally, the alpha subunit contains five modified amino acids near the active site region. Is methylated on His-271, Arg-285 and Cys-472, probably by the action of specific S-adenosylmethionine-dependent methyltransferases. Also contains a thioglycine at position 465, forming a thiopeptide bond. Contains a didehydroaspartate residue at position 470. The methylation on C5 of Arg-285 is a post-translational methylation not essential in vivo, but which plays a role for the stability and structural integrity of MCR. Does not show a methylation at Gln-420, as shown for M.marburgensis.

The protein localises to the cytoplasm. It carries out the reaction coenzyme B + methyl-coenzyme M = methane + coenzyme M-coenzyme B heterodisulfide. The protein operates within one-carbon metabolism; methyl-coenzyme M reduction; methane from methyl-coenzyme M: step 1/1. Component of the methyl-coenzyme M reductase (MCR) I that catalyzes the reductive cleavage of methyl-coenzyme M (CoM-S-CH3 or 2-(methylthio)ethanesulfonate) using coenzyme B (CoB or 7-mercaptoheptanoylthreonine phosphate) as reductant which results in the production of methane and the mixed heterodisulfide of CoB and CoM (CoM-S-S-CoB). This is the final step in methanogenesis. This is Methyl-coenzyme M reductase subunit alpha (mcrA) from Methanosarcina barkeri (strain Fusaro / DSM 804).